A 277-amino-acid polypeptide reads, in one-letter code: Probable cyclic nucleotide phosphodiesterase MCR_0369 (277 aa).

Fe cation contacts are provided by aspartate 17, histidine 19, aspartate 53, asparagine 83, histidine 165, histidine 204, and histidine 206. AMP contacts are provided by residues histidine 19, aspartate 53, and 83–84 (NH). Residue histidine 206 participates in AMP binding.

This sequence belongs to the cyclic nucleotide phosphodiesterase class-III family. Requires Fe(2+) as cofactor.

This Moraxella catarrhalis (strain BBH18) protein is Probable cyclic nucleotide phosphodiesterase MCR_0369.